Reading from the N-terminus, the 405-residue chain is S-adenosylmethionine synthase (405 aa).

Residue Gly141–Asp146 coordinates ATP.

The protein belongs to the AdoMet synthase 2 family. The cofactor is Mg(2+).

It catalyses the reaction L-methionine + ATP + H2O = S-adenosyl-L-methionine + phosphate + diphosphate. Its pathway is amino-acid biosynthesis; S-adenosyl-L-methionine biosynthesis; S-adenosyl-L-methionine from L-methionine: step 1/1. Its function is as follows. Catalyzes the formation of S-adenosylmethionine from methionine and ATP. The polypeptide is S-adenosylmethionine synthase (Methanococcus maripaludis (Methanococcus deltae)).